A 406-amino-acid chain; its full sequence is Purine nucleoside permease (406 aa).

The signal sequence occupies residues 1 to 22 (MKLSTLFTLATTISTLTTFTIA).

Belongs to the NUP family.

Its activity is regulated as follows. Mammalian nucleoside transport inhibitors dipyridamole and NBMPR inhibit adenosine transport by NUP. Nucleoside permease that transports adenosine and guanosine. Does not show any transport activities towards cytidine, adenine, guanine, uridine, and uracil. The polypeptide is Purine nucleoside permease (Candida albicans (Yeast)).